Here is a 397-residue protein sequence, read N- to C-terminus: Pectate lyase (397 aa).

Residues 1 to 25 (MDVYRIRISVFFLLVLLTFAALTTA) form the signal peptide. Asparagine 134 is a glycosylation site (N-linked (GlcNAc...) asparagine). Aspartate 191, aspartate 216, and aspartate 220 together coordinate Ca(2+). Asparagine 227 carries an N-linked (GlcNAc...) asparagine glycan. Arginine 272 is an active-site residue.

This sequence belongs to the polysaccharide lyase 1 family. Ca(2+) serves as cofactor.

The enzyme catalyses Eliminative cleavage of (1-&gt;4)-alpha-D-galacturonan to give oligosaccharides with 4-deoxy-alpha-D-galact-4-enuronosyl groups at their non-reducing ends.. It functions in the pathway glycan metabolism; pectin degradation; 2-dehydro-3-deoxy-D-gluconate from pectin: step 2/5. In Nicotiana tabacum (Common tobacco), this protein is Pectate lyase.